We begin with the raw amino-acid sequence, 520 residues long: GMP synthase [glutamine-hydrolyzing] (520 aa).

The region spanning S9–D202 is the Glutamine amidotransferase type-1 domain. The active-site Nucleophile is the C86. Active-site residues include H176 and E178. The GMPS ATP-PPase domain occupies W203 to R395. Residue S230–S236 participates in ATP binding.

As to quaternary structure, homodimer.

It carries out the reaction XMP + L-glutamine + ATP + H2O = GMP + L-glutamate + AMP + diphosphate + 2 H(+). It participates in purine metabolism; GMP biosynthesis; GMP from XMP (L-Gln route): step 1/1. In terms of biological role, catalyzes the synthesis of GMP from XMP. The protein is GMP synthase [glutamine-hydrolyzing] of Allorhizobium ampelinum (strain ATCC BAA-846 / DSM 112012 / S4) (Agrobacterium vitis (strain S4)).